Reading from the N-terminus, the 569-residue chain is Urease subunit beta (569 aa).

Positions 131–569 (GGIDTHIHFI…VSLGQLYCLF (439 aa)) constitute a Urease domain. The Ni(2+) site is built by H136, H138, and K219. K219 is modified (N6-carboxylysine). Substrate is bound at residue H221. Ni(2+) is bound by residues H248 and H274. H322 functions as the Proton donor in the catalytic mechanism. D362 serves as a coordination point for Ni(2+).

The protein belongs to the metallo-dependent hydrolases superfamily. Urease alpha subunit family. In terms of assembly, heterohexamer of 3 UreA (alpha) and 3 UreB (beta) subunits. Requires Ni cation as cofactor. Carboxylation allows a single lysine to coordinate two nickel ions.

The protein resides in the cytoplasm. The catalysed reaction is urea + 2 H2O + H(+) = hydrogencarbonate + 2 NH4(+). It functions in the pathway nitrogen metabolism; urea degradation; CO(2) and NH(3) from urea (urease route): step 1/1. This is Urease subunit beta from Helicobacter hepaticus (strain ATCC 51449 / 3B1).